Reading from the N-terminus, the 349-residue chain is 5-deoxyribose 1-phosphate isomerase (349 aa).

Substrate contacts are provided by residues 49–51 (RGA), R92, and Q199. The Proton donor role is filled by D240. 250–251 (NK) is a substrate binding site.

This sequence belongs to the EIF-2B alpha/beta/delta subunits family. DrdI subfamily.

The catalysed reaction is 5-deoxy-alpha-D-ribose 1-phosphate = 5-deoxy-D-ribulose 1-phosphate. It functions in the pathway carbohydrate degradation. Catalyzes the isomerization of 5-deoxy-alpha-D-ribose 1-phosphate to 5-deoxy-D-ribulose 1-phosphate, as part of a 5-deoxyribose salvage pathway that recycles this toxic radical SAM enzyme by-product to mainstream metabolites. The chain is 5-deoxyribose 1-phosphate isomerase from Clostridium botulinum (strain 657 / Type Ba4).